The primary structure comprises 580 residues: Netrin-3 (580 aa).

The signal sequence occupies residues 1 to 27 (MPGWPWGLLLTAGTLFAALSPGPPAPA). Positions 36–254 (APRGCVPGLV…AATDLQVGGR (219 aa)) constitute a Laminin N-terminal domain. The tract at residues 62–83 (PATRACDASDPRRAHSPALLTS) is disordered. Disulfide bonds link Cys-92–Cys-125, Cys-255–Cys-264, Cys-257–Cys-274, Cys-276–Cys-285, Cys-288–Cys-308, Cys-311–Cys-320, Cys-313–Cys-338, Cys-341–Cys-350, Cys-353–Cys-371, Cys-374–Cys-386, Cys-376–Cys-393, Cys-395–Cys-404, Cys-407–Cys-421, Cys-441–Cys-514, and Cys-460–Cys-577. Asn-104 carries N-linked (GlcNAc...) asparagine glycosylation. 3 consecutive Laminin EGF-like domains span residues 255–308 (CKCN…SHAC), 311–371 (CSCN…RRAC), and 374–421 (CDCH…VAPC). An N-linked (GlcNAc...) asparagine glycan is attached at Asn-387. The 137-residue stretch at 441 to 577 (CDSHCKPARG…LQRRERRGRC (137 aa)) folds into the NTR domain. Positions 500–502 (RGS) match the Cell attachment site; atypical motif.

In terms of tissue distribution, spinal cord.

The protein localises to the secreted. It localises to the extracellular space. The protein resides in the extracellular matrix. Its function is as follows. Netrins control guidance of CNS commissural axons and peripheral motor axons. This chain is Netrin-3 (NTN3), found in Homo sapiens (Human).